Reading from the N-terminus, the 191-residue chain is Transcription factor HES-2 (191 aa).

Residues 1 to 26 (MAPNVALADSMHNYQPKPGKRNQEAS) are disordered. Residues 28–85 (LRKTLKPLMEKRRRARINESLNQLKTLILPLIGKDNSRYSKLEKADILEMTVRFLRDI) enclose the bHLH domain. The Orange domain occupies 97-130 (YKEGYRACVERLSAILGKSHVLTGEASNRLLEYL). Polar residues-rich tracts occupy residues 159–173 (RTSQ…QPSS) and 182–191 (QLNSSIWRPW). The disordered stretch occupies residues 159 to 191 (RTSQFGSPLQNQPSSHRPAPCPPQLNSSIWRPW). A WRPW motif motif is present at residues 188–191 (WRPW).

Transcription repression requires formation of a complex with a corepressor protein of the Groucho/TLE family. Homodimer, and heterodimer with the other bHLH proteins neurod1, neurod4/ath3, hes1/hairy1 and hes6r. Weakly interacts with the bHLH protein hey1/hrt1. As to expression, expressed in the animal half of the early cleavage stage embryo. During neurulation and organogenesis, the otic vesicles and retina are the main sites of expression; expression in otic placodes begins as early as stage 13.5, persisting in the otic vesicles at stage 30 and beyond. Also transiently expressed in the olfactory placodes. In addition, weakly expressed in primary neurons. Expression in the retina begins at stage 21, and is seen throughout the neural retina by stage 30. From stage 35 onwards, expression progressively declines in the central retina, while remaining high in the margins. At stage 41, expression becomes restricted to the ciliary marginal zone (CMZ) of the retina, the only region where retinogenesis is still occurring.

It is found in the nucleus. Transcriptional repressor. Essential in the retina to govern glial versus neuronal differentiation. Promotes gliogenesis through the inhibition of neuronal differentiation by at least two distinct mechanisms; represses proneural gene transcription, and also physically interacts with proneural proteins, including neurod1. This is Transcription factor HES-2 (hes2) from Xenopus laevis (African clawed frog).